Here is a 107-residue protein sequence, read N- to C-terminus: Putative protein RFPL3S (107 aa).

As to expression, strongly expressed in the testis and weakly in brain, placenta and pancreas.

The protein is Putative protein RFPL3S (RFPL3S) of Homo sapiens (Human).